An 837-amino-acid polypeptide reads, in one-letter code: Granulocyte colony-stimulating factor receptor (837 aa).

An N-terminal signal peptide occupies residues 1–25; sequence MVGLGACTLTGVTLIFLLLPRSLES. Intrachain disulfides connect Cys26/Cys52 and Cys46/Cys102. The Ig-like C2-type domain maps to 26–118; it reads CGHIEISPPV…SVQLLDQAEL (93 aa). At 26–626 the chain is on the extracellular side; that stretch reads CGHIEISPPV…LTLRTLDPSD (601 aa). N-linked (GlcNAc...) asparagine glycans are attached at residues Asn51, Asn94, and Asn129. Fibronectin type-III domains lie at 126-231, 236-331, 334-433, 434-529, and 530-624; these read SPSN…LEPP, LDIG…LRPT, APTI…NEGP, AVTG…GERA, and PPHA…TLDP. Disulfide bonds link Cys132-Cys143, Cys168-Cys219, Cys178-Cys187, Cys249-Cys296, and Cys267-Cys310. Residues Asn186 and Asn279 are each glycosylated (N-linked (GlcNAc...) asparagine). A WSXWS motif motif is present at residues 319 to 323; it reads WSPWS. Asn392, Asn408, Asn474, Asn487, Asn582, and Asn613 each carry an N-linked (GlcNAc...) asparagine glycan. The chain crosses the membrane as a helical span at residues 627-650; sequence LNIFLGILCLVLLSTTCVVTWLCC. Over 651–837 the chain is Cytoplasmic; that stretch reads KRRGKTSFWS…VHGVEEQGGF (187 aa). A Box 1 motif motif is present at residues 658–666; that stretch reads FWSDVPDPA.

The protein belongs to the type I cytokine receptor family. Type 2 subfamily. Homodimer. The dimeric receptor binds two CSF3 molecules. Interacts with CEACAM1; down-regulates the CSF3R-STAT3 pathway through recruitment of PTPN6 that dephosphorylates CSF3R. In terms of processing, N-glycosylated. Found in bone marrow.

It is found in the membrane. In terms of biological role, receptor for granulocyte colony-stimulating factor (CSF3). In addition it may function in some adhesion or recognition events at the cell surface. This Mus musculus (Mouse) protein is Granulocyte colony-stimulating factor receptor (Csf3r).